The following is a 186-amino-acid chain: ATP synthase subunit b (186 aa).

A helical transmembrane segment spans residues Ile-25–Pro-45.

This sequence belongs to the ATPase B chain family. F-type ATPases have 2 components, F(1) - the catalytic core - and F(0) - the membrane proton channel. F(1) has five subunits: alpha(3), beta(3), gamma(1), delta(1), epsilon(1). F(0) has three main subunits: a(1), b(2) and c(10-14). The alpha and beta chains form an alternating ring which encloses part of the gamma chain. F(1) is attached to F(0) by a central stalk formed by the gamma and epsilon chains, while a peripheral stalk is formed by the delta and b chains.

The protein localises to the cell membrane. Its function is as follows. F(1)F(0) ATP synthase produces ATP from ADP in the presence of a proton or sodium gradient. F-type ATPases consist of two structural domains, F(1) containing the extramembraneous catalytic core and F(0) containing the membrane proton channel, linked together by a central stalk and a peripheral stalk. During catalysis, ATP synthesis in the catalytic domain of F(1) is coupled via a rotary mechanism of the central stalk subunits to proton translocation. Component of the F(0) channel, it forms part of the peripheral stalk, linking F(1) to F(0). In Nocardia farcinica (strain IFM 10152), this protein is ATP synthase subunit b.